The primary structure comprises 420 residues: Ribulose bisphosphate carboxylase (420 aa).

The active-site Proton acceptor is Lys155. Residue Lys157 coordinates substrate. 3 residues coordinate Mg(2+): Lys181, Asp183, and Glu184. Lys181 is modified (N6-carboxylysine). The active-site Proton acceptor is His273. Residues Arg274, His306, 343–345 (SGG), and 365–368 (QAGG) each bind substrate.

This sequence belongs to the RuBisCO large chain family. Type III subfamily. Homodimer or homodecamer. In contrast to form I RuBisCO, the form III RuBisCO is composed solely of large subunits. Requires Mg(2+) as cofactor.

The catalysed reaction is 2 (2R)-3-phosphoglycerate + 2 H(+) = D-ribulose 1,5-bisphosphate + CO2 + H2O. It carries out the reaction D-ribulose 1,5-bisphosphate + O2 = 2-phosphoglycolate + (2R)-3-phosphoglycerate + 2 H(+). In terms of biological role, catalyzes the addition of molecular CO(2) and H(2)O to ribulose 1,5-bisphosphate (RuBP), generating two molecules of 3-phosphoglycerate (3-PGA). Functions in an archaeal AMP degradation pathway, together with AMP phosphorylase and R15P isomerase. In Pyrococcus furiosus (strain ATCC 43587 / DSM 3638 / JCM 8422 / Vc1), this protein is Ribulose bisphosphate carboxylase.